The following is a 559-amino-acid chain: Arginine--tRNA ligase (559 aa).

The 'HIGH' region signature appears at Ala-116–His-126.

This sequence belongs to the class-I aminoacyl-tRNA synthetase family.

Its subcellular location is the cytoplasm. The catalysed reaction is tRNA(Arg) + L-arginine + ATP = L-arginyl-tRNA(Arg) + AMP + diphosphate. This chain is Arginine--tRNA ligase, found in Methanosphaerula palustris (strain ATCC BAA-1556 / DSM 19958 / E1-9c).